A 1331-amino-acid polypeptide reads, in one-letter code: MMMDILNTQQQKAAEGGRVLAPHTISSKLVKRLSSHSSHKLSRSDLKALGGSETISDGPSQLTFKDRYVFNESLYLKKLKKTALDDYYTRGIKLTNRYEEDDGDDEIIRLSNGDRIDEDLHSGVKFFSTTPYCRKMRSDSDELAWNEIATERFKWQSMLARVLKGDIVKGEKTRIANQVKKPGLNKELSDEIWLELKAWLNGRTMQEMEQSLTYLRDSSDSVFEEIMKFQIPQGKILSLDALEAILQDLMNRYHSVVSYWPNLKKMYKDKPITNTAEFTARIDVMNSWLNFKTNLTLRRQELDDWINRFSPISSSDNCQEDFDGVPQWNCKMKILAEQLMKEKNIESIFQKKIFYPLSPWMFKLKLHFIVYRETLTKMNIKYPYERLRSLLAFPVYLIKEVILTRLSYARKLKNPTMMMIDQMIDDFNAFIRLSVQLKYTLTKYCSNLPFDVDFDPTFENTVIEAIRYLFFLLNLKLIDSSKQNFKAPDLLLKYWDHLKNTGHYINGAETVIPNEFLKLTLRLVHKLQFYLLKQQNFPPTFANASEAEKWLSSIFENLGAMKRKLNRFSNILVKAFQNSAVYQINHNAQLVKKLKDAHYFLVYSGNTFESSGVYMFAAPELLGCDNDTILRILRNKSIGCDLVPKLDIGNNLNVYDITTKETDLNILVSKGEDSKGIPYYRVVANSSSDLDRHAHQSKKKNFSTDPFDQHLDEKNNEVFELEVALSSLGALVVLYPGEPVVWDGPVYKLPGNNLFASNEMDLGKIGNPNTLILLNQGSNYALTYQIDKFNQTVGDSVSFIEKRCSLNSIESSLQKINKAYYKLTYTVLNNYKGILGSFMKQCPGNELLNSIFMFGRDFGRSFLKYNAFSSKRKYVIIFLMVKLGMNWLKFLVEECDPTDQRTFRWCVLAMDFAMQMTSGYNILALNVKQFQELKERVSVCMSLLISHFDVMGARATEAENGMQQARLNIDTEENIDEEATLEINSRLRLEAIKTLEKTMKRNPRQMGKVLDATDQGNKYLLSLASSLSNVSMRWQKRSFIGGGTFGQVYSAINLENGEILAVKEIKIHDTTTMKKIFPLIKEEMTVLEMLNHPNIVQYYGVEVHRDKVNIFMEYCEGGSLASLLDHGRIEDEMVTQVYTFELLEGLAYLHQSGVVHRDIKPENILLDFNGIIKYVDFGTARTVVGSRTRTVRNAAVQDFGVETKSLNEMMGTPMYMAPETISGSAVKGKLGADDVWALGCVVLEMATGRRPWSNLDNEWAIMYHVAAGRIPQLPNRDEMTAAGRAFLERCLVQDPTMRATAVELLIDPWMIQIREIAFGNSEKDQVPILSS.

Residues 1034 to 1310 (WQKRSFIGGG…AVELLIDPWM (277 aa)) form the Protein kinase domain. ATP contacts are provided by residues 1040 to 1048 (IGGGTFGQV) and K1063. Residue D1158 is the Proton acceptor of the active site.

The protein belongs to the protein kinase superfamily. STE Ser/Thr protein kinase family. MAP kinase kinase kinase subfamily. In terms of assembly, interacts with by SSK1.

It carries out the reaction L-seryl-[protein] + ATP = O-phospho-L-seryl-[protein] + ADP + H(+). The enzyme catalyses L-threonyl-[protein] + ATP = O-phospho-L-threonyl-[protein] + ADP + H(+). Its function is as follows. Kinase involved in a signal transduction pathway that is activated by changes in the osmolarity of the extracellular environment. Activates the PBS2 MAP kinase kinase by phosphorylation. In Saccharomyces cerevisiae (strain ATCC 204508 / S288c) (Baker's yeast), this protein is Serine/threonine-protein kinase SSK22 (SSK22).